A 295-amino-acid polypeptide reads, in one-letter code: MADLDDIKDGKDFGIGTPQTNTPYTLKGCGALDWGMQSRLARIFNPKSNRTVMLAFDHGYFQGPTTGLERIDLSIAPLFAETDVLMCTRGILRSTVPPATNKPVVLRASGGNSILGELSNECVAVAMEDALRLNVCAVAAQVYIGSEFEHQSINNIIKLVDAGNRYGIPTLAVTGVGKEMARDARYFSLASRIAAEMGAQVVKTYFVEEGFEKVTASCPVPIVIAGGKKLPEHEALEMCFRAIDQGASGVDMGRNIFQSSAPLAMLKAVKKVVHENMSAREAFQFWQEEKQGEGQ.

Catalysis depends on lysine 203, which acts as the Schiff-base intermediate with substrate.

Belongs to the DeoC/FbaB aldolase family. In terms of assembly, homodecamer.

It localises to the cytoplasm. The enzyme catalyses dihydroxyacetone phosphate + acetyl-CoA = 3-hydroxy-2,4-dioxopentyl phosphate + CoA. In terms of biological role, involved in the degradation of phospho-AI-2, thereby terminating induction of the lsr operon and closing the AI-2 signaling cycle. Catalyzes the transfer of an acetyl moiety from 3-hydroxy-5-phosphonooxypentane-2,4-dione to CoA to form glycerone phosphate and acetyl-CoA. This Enterobacter sp. (strain 638) protein is 3-hydroxy-5-phosphonooxypentane-2,4-dione thiolase.